The sequence spans 209 residues: Ribosomal RNA large subunit methyltransferase E (209 aa).

S-adenosyl-L-methionine contacts are provided by Gly63, Trp65, Asp83, Asp99, and Asp124. Lys164 serves as the catalytic Proton acceptor.

It belongs to the class I-like SAM-binding methyltransferase superfamily. RNA methyltransferase RlmE family.

It is found in the cytoplasm. The enzyme catalyses uridine(2552) in 23S rRNA + S-adenosyl-L-methionine = 2'-O-methyluridine(2552) in 23S rRNA + S-adenosyl-L-homocysteine + H(+). Its function is as follows. Specifically methylates the uridine in position 2552 of 23S rRNA at the 2'-O position of the ribose in the fully assembled 50S ribosomal subunit. This Aliivibrio fischeri (strain ATCC 700601 / ES114) (Vibrio fischeri) protein is Ribosomal RNA large subunit methyltransferase E.